The sequence spans 212 residues: MTDLSDIRREYAKGGLRRADLPQNPMDLFELWMTQARDAELSDPTAMCVATVDEHGQPFQRIVLLKRFDDTGFVFFTNLGSRKAQQIAANNKVSLHFPWHPLERQVSVLGEAQALSTAEVLKYFMTRPKDSQIAAWVSQQSSKLSARQVLEGKFFEMKAKFAKGDVPLPSFWGGYLVRPSSIEFWQGGEHRLHDRFIYARHDAEWEIDRLAP.

Residues 8 to 11 (RREY) and Lys-66 each bind substrate. Residues 61 to 66 (RIVLLK), 76 to 77 (FT), Arg-82, Lys-83, and Gln-105 each bind FMN. 3 residues coordinate substrate: Tyr-123, Arg-127, and Ser-131. FMN-binding positions include 140–141 (QS) and Trp-185. 191-193 (RLH) serves as a coordination point for substrate. An FMN-binding site is contributed by Arg-195.

The protein belongs to the pyridoxamine 5'-phosphate oxidase family. As to quaternary structure, homodimer. It depends on FMN as a cofactor.

The enzyme catalyses pyridoxamine 5'-phosphate + O2 + H2O = pyridoxal 5'-phosphate + H2O2 + NH4(+). It carries out the reaction pyridoxine 5'-phosphate + O2 = pyridoxal 5'-phosphate + H2O2. The protein operates within cofactor metabolism; pyridoxal 5'-phosphate salvage; pyridoxal 5'-phosphate from pyridoxamine 5'-phosphate: step 1/1. It functions in the pathway cofactor metabolism; pyridoxal 5'-phosphate salvage; pyridoxal 5'-phosphate from pyridoxine 5'-phosphate: step 1/1. Catalyzes the oxidation of either pyridoxine 5'-phosphate (PNP) or pyridoxamine 5'-phosphate (PMP) into pyridoxal 5'-phosphate (PLP). This is Pyridoxine/pyridoxamine 5'-phosphate oxidase from Shewanella baltica (strain OS223).